The following is a 263-amino-acid chain: 5'-nucleotidase SurE (263 aa).

A divalent metal cation is bound by residues D10, D11, S41, and N95.

The protein belongs to the SurE nucleotidase family. It depends on a divalent metal cation as a cofactor.

The protein resides in the cytoplasm. The enzyme catalyses a ribonucleoside 5'-phosphate + H2O = a ribonucleoside + phosphate. In terms of biological role, nucleotidase that shows phosphatase activity on nucleoside 5'-monophosphates. The sequence is that of 5'-nucleotidase SurE from Methanoculleus marisnigri (strain ATCC 35101 / DSM 1498 / JR1).